The chain runs to 198 residues: Anthranilate synthase component 2 (198 aa).

The region spanning asparagine 2 to histidine 198 is the Glutamine amidotransferase type-1 domain. L-glutamine is bound at residue glycine 57 to glycine 59. The Nucleophile; for GATase activity role is filled by cysteine 87. Serine 137–leucine 138 serves as a coordination point for L-glutamine. Catalysis depends on for GATase activity residues histidine 175 and glutamate 177.

Heterotetramer consisting of two non-identical subunits: a beta subunit (TrpG) and a large alpha subunit (TrpE).

It carries out the reaction chorismate + L-glutamine = anthranilate + pyruvate + L-glutamate + H(+). It functions in the pathway amino-acid biosynthesis; L-tryptophan biosynthesis; L-tryptophan from chorismate: step 1/5. In terms of biological role, part of a heterotetrameric complex that catalyzes the two-step biosynthesis of anthranilate, an intermediate in the biosynthesis of L-tryptophan. In the first step, the glutamine-binding beta subunit (TrpG) of anthranilate synthase (AS) provides the glutamine amidotransferase activity which generates ammonia as a substrate that, along with chorismate, is used in the second step, catalyzed by the large alpha subunit of AS (TrpE) to produce anthranilate. In the absence of TrpG, TrpE can synthesize anthranilate directly from chorismate and high concentrations of ammonia. This Halobacterium salinarum (strain ATCC 700922 / JCM 11081 / NRC-1) (Halobacterium halobium) protein is Anthranilate synthase component 2 (trpG).